Here is a 451-residue protein sequence, read N- to C-terminus: Tubulin beta-1 chain (451 aa).

Positions 11, 73, 142, 146, 147, 148, 208, and 230 each coordinate GTP. Residue E73 participates in Mg(2+) binding. Residues 430–451 form a disordered region; sequence QEATADDEAEFEEEGEVEGEYA. Over residues 433-451 the composition is skewed to acidic residues; it reads TADDEAEFEEEGEVEGEYA.

The protein belongs to the tubulin family. In terms of assembly, dimer of alpha and beta chains. A typical microtubule is a hollow water-filled tube with an outer diameter of 25 nm and an inner diameter of 15 nM. Alpha-beta heterodimers associate head-to-tail to form protofilaments running lengthwise along the microtubule wall with the beta-tubulin subunit facing the microtubule plus end conferring a structural polarity. Microtubules usually have 13 protofilaments but different protofilament numbers can be found in some organisms and specialized cells. The cofactor is Mg(2+).

It is found in the cytoplasm. Its subcellular location is the cytoskeleton. Its function is as follows. Tubulin is the major constituent of microtubules, a cylinder consisting of laterally associated linear protofilaments composed of alpha- and beta-tubulin heterodimers. Microtubules grow by the addition of GTP-tubulin dimers to the microtubule end, where a stabilizing cap forms. Below the cap, tubulin dimers are in GDP-bound state, owing to GTPase activity of alpha-tubulin. This chain is Tubulin beta-1 chain, found in Homarus americanus (American lobster).